Reading from the N-terminus, the 344-residue chain is Holliday junction branch migration complex subunit RuvB (344 aa).

Residues 1–182 are large ATPase domain (RuvB-L); the sequence is MRIEALNTAP…FGINSRLDYY (182 aa). Residues Ile-21, Arg-22, Gly-63, Lys-66, Thr-67, Thr-68, 129-131, Arg-172, Tyr-182, and Arg-219 each bind ATP; that span reads EDY. Thr-67 serves as a coordination point for Mg(2+). Residues 183-253 are small ATPAse domain (RuvB-S); sequence NPELLQSIII…VARRTLESLE (71 aa). Positions 256 to 344 are head domain (RuvB-H); it reads EGGLDDMDKK…GSLFDTAEDG (89 aa). Residues Arg-311 and Arg-316 each coordinate DNA.

This sequence belongs to the RuvB family. In terms of assembly, homohexamer. Forms an RuvA(8)-RuvB(12)-Holliday junction (HJ) complex. HJ DNA is sandwiched between 2 RuvA tetramers; dsDNA enters through RuvA and exits via RuvB. An RuvB hexamer assembles on each DNA strand where it exits the tetramer. Each RuvB hexamer is contacted by two RuvA subunits (via domain III) on 2 adjacent RuvB subunits; this complex drives branch migration. In the full resolvosome a probable DNA-RuvA(4)-RuvB(12)-RuvC(2) complex forms which resolves the HJ.

Its subcellular location is the cytoplasm. The catalysed reaction is ATP + H2O = ADP + phosphate + H(+). The RuvA-RuvB-RuvC complex processes Holliday junction (HJ) DNA during genetic recombination and DNA repair, while the RuvA-RuvB complex plays an important role in the rescue of blocked DNA replication forks via replication fork reversal (RFR). RuvA specifically binds to HJ cruciform DNA, conferring on it an open structure. The RuvB hexamer acts as an ATP-dependent pump, pulling dsDNA into and through the RuvAB complex. RuvB forms 2 homohexamers on either side of HJ DNA bound by 1 or 2 RuvA tetramers; 4 subunits per hexamer contact DNA at a time. Coordinated motions by a converter formed by DNA-disengaged RuvB subunits stimulates ATP hydrolysis and nucleotide exchange. Immobilization of the converter enables RuvB to convert the ATP-contained energy into a lever motion, pulling 2 nucleotides of DNA out of the RuvA tetramer per ATP hydrolyzed, thus driving DNA branch migration. The RuvB motors rotate together with the DNA substrate, which together with the progressing nucleotide cycle form the mechanistic basis for DNA recombination by continuous HJ branch migration. Branch migration allows RuvC to scan DNA until it finds its consensus sequence, where it cleaves and resolves cruciform DNA. This Chlorobaculum tepidum (strain ATCC 49652 / DSM 12025 / NBRC 103806 / TLS) (Chlorobium tepidum) protein is Holliday junction branch migration complex subunit RuvB.